The primary structure comprises 187 residues: Cell division protein SepF (187 aa).

The segment at 21-97 (EVEVPDKQQQ…ATPNNASQES (77 aa)) is disordered. Composition is skewed to polar residues over residues 38-63 (EQSQ…YTTT) and 70-97 (RMSN…SQES).

Belongs to the SepF family. As to quaternary structure, homodimer. Interacts with FtsZ.

Its subcellular location is the cytoplasm. Functionally, cell division protein that is part of the divisome complex and is recruited early to the Z-ring. Probably stimulates Z-ring formation, perhaps through the cross-linking of FtsZ protofilaments. Its function overlaps with FtsA. In Staphylococcus aureus (strain MRSA252), this protein is Cell division protein SepF.